The chain runs to 202 residues: Crustacean calcium-binding protein 23 (202 aa).

Ser-1 carries the N-acetylserine modification. EF-hand domains lie at 33–68, 69–104, 105–140, and 148–185; these read SGLL…FGLD, LSDG…EMTE, PRKK…KTHP, and TEDE…LSKA. Ca(2+) contacts are provided by Asp-84, Glu-93, Asp-118, Asp-122, and Asp-129.

Monomer or disulfide-linked dimers. In terms of tissue distribution, striated muscle and brain.

In terms of biological role, possibly acts as a regulatory protein and not as a calcium buffer or transport protein. The polypeptide is Crustacean calcium-binding protein 23 (Faxonius limosus (Spinycheek crayfish)).